The following is a 442-amino-acid chain: tRNA-2-methylthio-N(6)-dimethylallyladenosine synthase (442 aa).

The region spanning 3-120 (KKLYIETHGC…LPEMIDAARI (118 aa)) is the MTTase N-terminal domain. The [4Fe-4S] cluster site is built by cysteine 12, cysteine 49, cysteine 83, cysteine 157, cysteine 161, and cysteine 164. In terms of domain architecture, Radical SAM core spans 143-375 (RIDGPSAYVS…QHRLNQQGFE (233 aa)). Positions 378 to 442 (RQMVGSVQRI…PHSLRGSLIQ (65 aa)) constitute a TRAM domain.

The protein belongs to the methylthiotransferase family. MiaB subfamily. Monomer. Requires [4Fe-4S] cluster as cofactor.

It localises to the cytoplasm. The catalysed reaction is N(6)-dimethylallyladenosine(37) in tRNA + (sulfur carrier)-SH + AH2 + 2 S-adenosyl-L-methionine = 2-methylsulfanyl-N(6)-dimethylallyladenosine(37) in tRNA + (sulfur carrier)-H + 5'-deoxyadenosine + L-methionine + A + S-adenosyl-L-homocysteine + 2 H(+). Functionally, catalyzes the methylthiolation of N6-(dimethylallyl)adenosine (i(6)A), leading to the formation of 2-methylthio-N6-(dimethylallyl)adenosine (ms(2)i(6)A) at position 37 in tRNAs that read codons beginning with uridine. The protein is tRNA-2-methylthio-N(6)-dimethylallyladenosine synthase of Pseudomonas fluorescens (strain Pf0-1).